A 27-amino-acid polypeptide reads, in one-letter code: DELTA-pseudomyrmecitoxin-Pp1a subunit A (27 aa).

Heterodimer composed of subunit A and subunit B (DELTA-PSDTX-Pp1a); disulfide-linked. In terms of tissue distribution, expressed by the venom gland.

It is found in the secreted. This heterodimer has insecticidal and cytotoxic properties. Induces immediate paralysis when injected into blowflies (Lucilia cuprina), and then death within 24 hours. Also inhibits the growth of Aedes albopictus mosquito C6/36 cells. This chain is DELTA-pseudomyrmecitoxin-Pp1a subunit A, found in Pseudomyrmex penetrator (Ant).